Reading from the N-terminus, the 286-residue chain is Phosphatidylserine decarboxylase proenzyme (286 aa).

Catalysis depends on charge relay system; for autoendoproteolytic cleavage activity residues Asp-90, His-147, and Ser-250. The Schiff-base intermediate with substrate; via pyruvic acid; for decarboxylase activity role is filled by Ser-250. At Ser-250 the chain carries Pyruvic acid (Ser); by autocatalysis.

It belongs to the phosphatidylserine decarboxylase family. PSD-B subfamily. Prokaryotic type I sub-subfamily. As to quaternary structure, heterodimer of a large membrane-associated beta subunit and a small pyruvoyl-containing alpha subunit. Pyruvate is required as a cofactor. Post-translationally, is synthesized initially as an inactive proenzyme. Formation of the active enzyme involves a self-maturation process in which the active site pyruvoyl group is generated from an internal serine residue via an autocatalytic post-translational modification. Two non-identical subunits are generated from the proenzyme in this reaction, and the pyruvate is formed at the N-terminus of the alpha chain, which is derived from the carboxyl end of the proenzyme. The autoendoproteolytic cleavage occurs by a canonical serine protease mechanism, in which the side chain hydroxyl group of the serine supplies its oxygen atom to form the C-terminus of the beta chain, while the remainder of the serine residue undergoes an oxidative deamination to produce ammonia and the pyruvoyl prosthetic group on the alpha chain. During this reaction, the Ser that is part of the protease active site of the proenzyme becomes the pyruvoyl prosthetic group, which constitutes an essential element of the active site of the mature decarboxylase.

Its subcellular location is the cell membrane. The catalysed reaction is a 1,2-diacyl-sn-glycero-3-phospho-L-serine + H(+) = a 1,2-diacyl-sn-glycero-3-phosphoethanolamine + CO2. Its pathway is phospholipid metabolism; phosphatidylethanolamine biosynthesis; phosphatidylethanolamine from CDP-diacylglycerol: step 2/2. Catalyzes the formation of phosphatidylethanolamine (PtdEtn) from phosphatidylserine (PtdSer). The sequence is that of Phosphatidylserine decarboxylase proenzyme from Saccharophagus degradans (strain 2-40 / ATCC 43961 / DSM 17024).